The sequence spans 275 residues: Phosphatidylglycerol--prolipoprotein diacylglyceryl transferase (275 aa).

The next 7 helical transmembrane spans lie at 22 to 42, 61 to 81, 96 to 116, 125 to 145, 177 to 197, 204 to 224, and 238 to 258; these read LSVR…MWLA, LLFY…VLFY, IWTG…AMIW, FFTV…VGRI, SQLY…NLFW, GAIS…VEFV, and ISMG…MVWA. Arginine 144 contacts a 1,2-diacyl-sn-glycero-3-phospho-(1'-sn-glycerol).

This sequence belongs to the Lgt family.

It is found in the cell inner membrane. The catalysed reaction is L-cysteinyl-[prolipoprotein] + a 1,2-diacyl-sn-glycero-3-phospho-(1'-sn-glycerol) = an S-1,2-diacyl-sn-glyceryl-L-cysteinyl-[prolipoprotein] + sn-glycerol 1-phosphate + H(+). It participates in protein modification; lipoprotein biosynthesis (diacylglyceryl transfer). Functionally, catalyzes the transfer of the diacylglyceryl group from phosphatidylglycerol to the sulfhydryl group of the N-terminal cysteine of a prolipoprotein, the first step in the formation of mature lipoproteins. The sequence is that of Phosphatidylglycerol--prolipoprotein diacylglyceryl transferase from Aeromonas salmonicida (strain A449).